Here is a 141-residue protein sequence, read N- to C-terminus: Protein MGF 100-2L (141 aa).

Belongs to the asfivirus MGF 100 family.

Its function is as follows. Plays a role in virus cell tropism, and may be required for efficient virus replication in macrophages. This is Protein MGF 100-2L from African swine fever virus (isolate Tick/Malawi/Lil 20-1/1983) (ASFV).